The following is a 271-amino-acid chain: Large ribosomal subunit protein uL3c (271 aa).

A chloroplast-targeting transit peptide spans 1–49 (MAIAMAVVSFPSLLNKTTLSSSLFTPTFLPAKSSSLLIKSSPKTRFVVS). Residues 190–222 (HGSKSHRALGSIGAGTTPGRVYKGKKMPGRMGG) form a disordered region.

It belongs to the universal ribosomal protein uL3 family. Part of the 50S ribosomal subunit.

Its subcellular location is the plastid. It is found in the chloroplast. Its function is as follows. One of the primary rRNA binding proteins, it binds directly near the 3'-end of the 23S rRNA, where it nucleates assembly of the 50S subunit. The sequence is that of Large ribosomal subunit protein uL3c (RPL3A) from Arabidopsis thaliana (Mouse-ear cress).